Consider the following 150-residue polypeptide: D-aminoacyl-tRNA deacylase (150 aa).

The short motif at 138-139 is the Gly-cisPro motif, important for rejection of L-amino acids element; it reads GP.

It belongs to the DTD family. In terms of assembly, homodimer.

Its subcellular location is the cytoplasm. The catalysed reaction is glycyl-tRNA(Ala) + H2O = tRNA(Ala) + glycine + H(+). The enzyme catalyses a D-aminoacyl-tRNA + H2O = a tRNA + a D-alpha-amino acid + H(+). An aminoacyl-tRNA editing enzyme that deacylates mischarged D-aminoacyl-tRNAs. Also deacylates mischarged glycyl-tRNA(Ala), protecting cells against glycine mischarging by AlaRS. Acts via tRNA-based rather than protein-based catalysis; rejects L-amino acids rather than detecting D-amino acids in the active site. By recycling D-aminoacyl-tRNA to D-amino acids and free tRNA molecules, this enzyme counteracts the toxicity associated with the formation of D-aminoacyl-tRNA entities in vivo and helps enforce protein L-homochirality. The protein is D-aminoacyl-tRNA deacylase of Bacteroides thetaiotaomicron (strain ATCC 29148 / DSM 2079 / JCM 5827 / CCUG 10774 / NCTC 10582 / VPI-5482 / E50).